A 276-amino-acid chain; its full sequence is Formamidopyrimidine-DNA glycosylase (276 aa).

P2 acts as the Schiff-base intermediate with DNA in catalysis. Residue E3 is the Proton donor of the active site. Catalysis depends on K58, which acts as the Proton donor; for beta-elimination activity. DNA-binding residues include H92, R111, and R153. The FPG-type zinc-finger motif lies at 238 to 272; that stretch reads TVYGRERQNCLNCSSTIIKTKHSGRSTFYCRTCQY. R262 functions as the Proton donor; for delta-elimination activity in the catalytic mechanism.

Belongs to the FPG family. Monomer. Zn(2+) serves as cofactor.

It carries out the reaction Hydrolysis of DNA containing ring-opened 7-methylguanine residues, releasing 2,6-diamino-4-hydroxy-5-(N-methyl)formamidopyrimidine.. It catalyses the reaction 2'-deoxyribonucleotide-(2'-deoxyribose 5'-phosphate)-2'-deoxyribonucleotide-DNA = a 3'-end 2'-deoxyribonucleotide-(2,3-dehydro-2,3-deoxyribose 5'-phosphate)-DNA + a 5'-end 5'-phospho-2'-deoxyribonucleoside-DNA + H(+). In terms of biological role, involved in base excision repair of DNA damaged by oxidation or by mutagenic agents. Acts as a DNA glycosylase that recognizes and removes damaged bases. Has a preference for oxidized purines, such as 7,8-dihydro-8-oxoguanine (8-oxoG). Has AP (apurinic/apyrimidinic) lyase activity and introduces nicks in the DNA strand. Cleaves the DNA backbone by beta-delta elimination to generate a single-strand break at the site of the removed base with both 3'- and 5'-phosphates. This chain is Formamidopyrimidine-DNA glycosylase, found in Rickettsia felis (strain ATCC VR-1525 / URRWXCal2) (Rickettsia azadi).